Here is a 121-residue protein sequence, read N- to C-terminus: Phosphoribosyl-AMP cyclohydrolase (121 aa).

Aspartate 74 lines the Mg(2+) pocket. Cysteine 75 serves as a coordination point for Zn(2+). Residues aspartate 76 and aspartate 78 each contribute to the Mg(2+) site. Residues cysteine 91 and cysteine 98 each coordinate Zn(2+).

This sequence belongs to the PRA-CH family. In terms of assembly, homodimer. Requires Mg(2+) as cofactor. The cofactor is Zn(2+).

It localises to the cytoplasm. The enzyme catalyses 1-(5-phospho-beta-D-ribosyl)-5'-AMP + H2O = 1-(5-phospho-beta-D-ribosyl)-5-[(5-phospho-beta-D-ribosylamino)methylideneamino]imidazole-4-carboxamide. It functions in the pathway amino-acid biosynthesis; L-histidine biosynthesis; L-histidine from 5-phospho-alpha-D-ribose 1-diphosphate: step 3/9. Catalyzes the hydrolysis of the adenine ring of phosphoribosyl-AMP. This is Phosphoribosyl-AMP cyclohydrolase from Methanothrix thermoacetophila (strain DSM 6194 / JCM 14653 / NBRC 101360 / PT) (Methanosaeta thermophila).